Reading from the N-terminus, the 29-residue chain is Glucagon (29 aa).

Belongs to the glucagon family.

The protein resides in the secreted. In terms of biological role, glucagon plays a key role in glucose metabolism and homeostasis. Regulates blood glucose by increasing gluconeogenesis and decreasing glycolysis. The protein is Glucagon (GCG) of Struthio camelus (Common ostrich).